The following is a 203-amino-acid chain: Mitotic spindle checkpoint component mad2 (203 aa).

The HORMA domain occupies 13–197 (KGSSKLVSEF…TSMHKIDCQV (185 aa)).

It belongs to the MAD2 family. In terms of assembly, interacts with mad3 and slp1.

It localises to the nucleus. In terms of biological role, feedback control that prevents cells with incompletely assembled spindles from leaving mitosis. It interacts with the anaphase promoting complex/cyclosome (APC/C) thereby inhibiting APC/C-dependent proteolysis, a step required for exit from mitosis. The polypeptide is Mitotic spindle checkpoint component mad2 (Schizosaccharomyces pombe (strain 972 / ATCC 24843) (Fission yeast)).